The primary structure comprises 560 residues: Arginine--tRNA ligase (560 aa).

The 'HIGH' region motif lies at 121–131 (PNIAKPFSMGH).

It belongs to the class-I aminoacyl-tRNA synthetase family. In terms of assembly, monomer.

The protein resides in the cytoplasm. It carries out the reaction tRNA(Arg) + L-arginine + ATP = L-arginyl-tRNA(Arg) + AMP + diphosphate. In Exiguobacterium sibiricum (strain DSM 17290 / CCUG 55495 / CIP 109462 / JCM 13490 / 255-15), this protein is Arginine--tRNA ligase.